The following is a 546-amino-acid chain: Tegument protein UL21 homolog (546 aa).

It belongs to the alphaherpesvirinae HHV-1 UL21 protein family.

The protein localises to the virion tegument. It localises to the host cytoplasm. The protein resides in the host nucleus. Functionally, may facilitate the viral transport through neural circuits. The protein is Tegument protein UL21 homolog (MDV033) of Gallus gallus (Chicken).